The primary structure comprises 109 residues: Cysteine-rich venom protein 7 (109 aa).

An N-terminal signal peptide occupies residues 1–21; the sequence is MSKVFVIILVALMVAISIASA. Disulfide bonds link Cys-30-Cys-47, Cys-37-Cys-52, Cys-46-Cys-58, Cys-70-Cys-90, and Cys-78-Cys-98.

As to expression, expressed by the venom gland.

It localises to the secreted. The sequence is that of Cysteine-rich venom protein 7 from Pimpla hypochondriaca (Parasitoid wasp).